Reading from the N-terminus, the 324-residue chain is NADH-ubiquinone oxidoreductase chain 1 (324 aa).

The next 8 helical transmembrane spans lie at 9 to 29 (LINP…LTLI), 75 to 95 (FLFL…WAPM), 106 to 126 (LGIL…LGSG), 146 to 166 (ISYE…SGGY), 177 to 197 (SIWL…STLA), 228 to 248 (LFFL…AVLF), 259 to 279 (ELTT…FLWV), and 299 to 319 (FLPL…ALAG).

The protein belongs to the complex I subunit 1 family.

The protein localises to the mitochondrion inner membrane. The catalysed reaction is a ubiquinone + NADH + 5 H(+)(in) = a ubiquinol + NAD(+) + 4 H(+)(out). In terms of biological role, core subunit of the mitochondrial membrane respiratory chain NADH dehydrogenase (Complex I) that is believed to belong to the minimal assembly required for catalysis. Complex I functions in the transfer of electrons from NADH to the respiratory chain. The immediate electron acceptor for the enzyme is believed to be ubiquinone. This chain is NADH-ubiquinone oxidoreductase chain 1 (MT-ND1), found in Cyprinus carpio (Common carp).